The chain runs to 1218 residues: NACHT, LRR and PYD domains-containing protein 1a allele 5 (1218 aa).

Over residues Met1–Thr29 the composition is skewed to polar residues. Disordered stretches follow at residues Met1–Gln44 and Glu71–Glu91. Over residues Arg77–Leu87 the composition is skewed to basic residues. The region spanning Gln175–Leu484 is the NACHT domain. Gly181–Ser188 is a binding site for ATP. LRR repeat units lie at residues Lys343 to Cys364, Asn673 to Cys693, and Arg730 to Cys750. Over residues Thr799–Lys815 the composition is skewed to polar residues. The interval Thr799–Val842 is disordered. The interval Phe835–Phe968 is ZU5. In terms of domain architecture, FIIND spans Phe835–Ser1118. A UPA region spans residues Ser969–Ser1118. The region spanning Asp1122–Ser1211 is the CARD domain.

Belongs to the NLRP family. Interacts (via LRR repeats) with BCL2 and BCL2L1 (via the loop between motifs BH4 and BH3). Interacts with NOD2; this interaction is enhanced in the presence of muramyl dipeptide (MDP) and increases IL1B release. Interacts with EIF2AK2/PKR; this interaction requires EIF2AK2 activity, is accompanied by EIF2AK2 autophosphorylation and promotes inflammasome assembly in response to danger-associated signals. Interacts with MEFV; this interaction targets Nlrp1a to degradation by autophagy, hence preventing excessive IL1B- and IL18-mediated inflammation. Interacts with DPP9; leading to inhibit activation of the inflammasome. DPP9 acts via formation of a ternary complex, composed of a DPP9 homodimer, one full-length NLRP1 protein, and one cleaved C-terminus of Nlrp1a (NACHT, LRR and PYD domains-containing protein 1a, C-terminus). Interacts with DPP8; leading to inhibit activation of the inflammasome, probably via formation of a ternary complex with DPP8. In terms of assembly, interacts with the C-terminal part of Nlrp1a (NACHT, LRR and PYD domains-containing protein 1a, C-terminus) in absence of pathogens and other damage-associated signals. As to quaternary structure, interacts with the N-terminal part of Nlrp1a (NACHT, LRR and PYD domains-containing protein 1a, N-terminus) in absence of pathogens and other damage-associated signals. Homomultimer; forms the Nlrp1a inflammasome polymeric complex, a filament composed of homopolymers of this form in response to pathogens and other damage-associated signals. The Nlrp1a inflammasome polymeric complex directly recruits pro-caspase-1 (proCASP1) independently of PYCARD/ASC. Interacts (via CARD domain) with CASP1 (via CARD domain); leading to CASP1 activation. In terms of processing, autocatalytically cleaved. Autocatalytic cleavage in FIIND region occurs constitutively, prior to activation signals, and is required for inflammasome activity (IL1B release), possibly by facilitating CASP1 binding. Both N- and C-terminal parts remain associated non-covalently. Post-translationally, ubiquitinated in response to pathogen-associated signals, leading to its degradation by the proteasome and subsequent release of the cleaved C-terminal part of the protein (NACHT, LRR and PYD domains-containing protein 1a, C-terminus), which polymerizes and forms the Nlrp1a inflammasome.

The protein resides in the cytoplasm. It is found in the cytosol. Its subcellular location is the nucleus. It localises to the inflammasome. Its activity is regulated as follows. Activated by pathogens and other damage-associated signals: activation promotes ubiquitination and degradation of the N-terminal part, releasing the cleaved C-terminal part of the protein (NACHT, LRR and PYD domains-containing protein 1a, C-terminus), which polymerizes and forms the Nlrp1a inflammasome. Nlrp1a inflammasome is inhibited by DPP8 and DPP9, which sequester the C-terminal fragment of Nlrp1a (NACHT, LRR and PYD domains-containing protein 1a, C-terminus) in a ternary complex, thereby preventing Nlrp1a oligomerization and activation. Nlrp1a inflammasome is strongly activated by Val-boroPro (Talabostat, PT-100), an inhibitor of dipeptidyl peptidases DPP8 and DPP9. Val-boroPro relieves inhibition of DPP8 and/or DPP9 by promoting disruption of the ternary complex, releasing its C-terminal part from autoinhibition. Not activated by cleavage by B.anthracis lethal toxin (LT) endopeptidase. Highly activated by Toxoplasma gondii. Acts as the sensor component of the Nlrp1a inflammasome, which mediates inflammasome activation in response to various pathogen-associated signals, leading to subsequent pyroptosis. Inflammasomes are supramolecular complexes that assemble in the cytosol in response to pathogens and other damage-associated signals and play critical roles in innate immunity and inflammation. Acts as a recognition receptor (PRR): recognizes specific pathogens and other damage-associated signals, such as Val-boroPro inhibitor, and mediates the formation of the inflammasome polymeric complex. In response to pathogen-associated signals, the N-terminal part of Nlrp1a is degraded by the proteasome, releasing the cleaved C-terminal part of the protein (NACHT, LRR and PYD domains-containing protein 1a, C-terminus), which polymerizes to initiate the formation of the inflammasome complex: the inflammasome directly recruits pro-caspase-1 (proCASP1) independently of PYCARD/ASC and promotes caspase-1 (CASP1) activation, which subsequently cleaves and activates inflammatory cytokines IL1B and IL18 and gasdermin-D (GSDMD), leading to pyroptosis. In the absence of GSDMD expression, the Nlrp1a inflammasome is able to recruit and activate CASP8, leading to activation of gasdermin-E (GSDME). Its function is as follows. Constitutes the precursor of the Nlrp1a inflammasome, which mediates autoproteolytic processing within the FIIND domain to generate the N-terminal and C-terminal parts, which are associated non-covalently in absence of pathogens and other damage-associated signals. In terms of biological role, regulatory part that prevents formation of the Nlrp1a inflammasome: in absence of pathogens and other damage-associated signals, interacts with the C-terminal part of Nlrp1a (NACHT, LRR and PYD domains-containing protein 1a, C-terminus), preventing activation of the Nlrp1a inflammasome. In response to pathogen-associated signals, this part is ubiquitinated by the N-end rule pathway and degraded by the proteasome, releasing the cleaved C-terminal part of the protein, which polymerizes and forms the Nlrp1a inflammasome. Functionally, constitutes the active part of the Nlrp1a inflammasome. In absence of pathogens and other damage-associated signals, interacts with the N-terminal part of Nlrp1a (NACHT, LRR and PYD domains-containing protein 1a, N-terminus), preventing activation of the Nlrp1a inflammasome. In response to pathogen-associated signals, the N-terminal part of Nlrp1a is degraded by the proteasome, releasing this form, which polymerizes to form the Nlrp1a inflammasome complex: the Nlrp1a inflammasome complex then directly recruits pro-caspase-1 (proCASP1) and promotes caspase-1 (CASP1) activation, leading to gasdermin-D (GSDMD) cleavage and subsequent pyroptosis. This chain is NACHT, LRR and PYD domains-containing protein 1a allele 5, found in Rattus norvegicus (Rat).